A 79-amino-acid polypeptide reads, in one-letter code: Acyl carrier protein (79 aa).

Residues 6 to 79 (KEILDGLAEI…VQDVINYIQK (74 aa)) enclose the Carrier domain. An O-(pantetheine 4'-phosphoryl)serine modification is found at S41.

Belongs to the acyl carrier protein (ACP) family. Post-translationally, 4'-phosphopantetheine is transferred from CoA to a specific serine of apo-ACP by AcpS. This modification is essential for activity because fatty acids are bound in thioester linkage to the sulfhydryl of the prosthetic group.

The protein localises to the cytoplasm. It participates in lipid metabolism; fatty acid biosynthesis. Its function is as follows. Carrier of the growing fatty acid chain in fatty acid biosynthesis. In Thermobifida fusca (strain YX), this protein is Acyl carrier protein.